A 344-amino-acid polypeptide reads, in one-letter code: Phosphate acyltransferase (344 aa).

This sequence belongs to the PlsX family. As to quaternary structure, homodimer. Probably interacts with PlsY.

It localises to the cytoplasm. It carries out the reaction a fatty acyl-[ACP] + phosphate = an acyl phosphate + holo-[ACP]. It participates in lipid metabolism; phospholipid metabolism. Catalyzes the reversible formation of acyl-phosphate (acyl-PO(4)) from acyl-[acyl-carrier-protein] (acyl-ACP). This enzyme utilizes acyl-ACP as fatty acyl donor, but not acyl-CoA. This chain is Phosphate acyltransferase, found in Yersinia pestis bv. Antiqua (strain Antiqua).